Reading from the N-terminus, the 170-residue chain is Large ribosomal subunit protein uL11 (170 aa).

Belongs to the universal ribosomal protein uL11 family. In terms of assembly, part of the ribosomal stalk of the 50S ribosomal subunit. Interacts with L10 and the large rRNA to form the base of the stalk. L10 forms an elongated spine to which L12 dimers bind in a sequential fashion forming a multimeric L10(L12)X complex.

Its function is as follows. Forms part of the ribosomal stalk which helps the ribosome interact with GTP-bound translation factors. The polypeptide is Large ribosomal subunit protein uL11 (Sulfolobus acidocaldarius (strain ATCC 33909 / DSM 639 / JCM 8929 / NBRC 15157 / NCIMB 11770)).